A 447-amino-acid chain; its full sequence is Trigger factor (447 aa).

A PPIase FKBP-type domain is found at 159-244 (GDMLLMQVES…VREIKEEKLP (86 aa)).

Belongs to the FKBP-type PPIase family. Tig subfamily.

It localises to the cytoplasm. The enzyme catalyses [protein]-peptidylproline (omega=180) = [protein]-peptidylproline (omega=0). Its function is as follows. Involved in protein export. Acts as a chaperone by maintaining the newly synthesized protein in an open conformation. Functions as a peptidyl-prolyl cis-trans isomerase. The protein is Trigger factor of Dehalococcoides mccartyi (strain ATCC BAA-2100 / JCM 16839 / KCTC 5957 / BAV1).